Consider the following 661-residue polypeptide: 3-hydroxypropionyl-coenzyme A synthetase (661 aa).

The active site involves Asp526. Lys617 is modified (N6-acetyllysine).

This sequence belongs to the ATP-dependent AMP-binding enzyme family. In terms of assembly, homotetramer.

The enzyme catalyses 3-hydroxypropanoate + ATP + CoA = 3-hydroxypropanoyl-CoA + AMP + diphosphate. Its function is as follows. Plays a role in the autotrophic CO(2) fixation pathway. Activates 3-hydroxypropionate to its CoA ester. Can also activate propionate, and to a lesser extent acrylate, acetate and butyrate. This chain is 3-hydroxypropionyl-coenzyme A synthetase, found in Metallosphaera sedula (strain ATCC 51363 / DSM 5348 / JCM 9185 / NBRC 15509 / TH2).